The primary structure comprises 705 residues: Polyribonucleotide nucleotidyltransferase (705 aa).

Mg(2+)-binding residues include Asp485 and Asp491. Residues 552-611 enclose the KH domain; it reads PRVYTMTIAPEKIRDVIGAGGKTINKIIGETGVQIDIKEDGKIYVMSSDSVGANRALKMI. Positions 621-689 constitute an S1 motif domain; the sequence is GEIYLGKVTR…DQGRINLSRR (69 aa).

The protein belongs to the polyribonucleotide nucleotidyltransferase family. It depends on Mg(2+) as a cofactor.

It is found in the cytoplasm. The catalysed reaction is RNA(n+1) + phosphate = RNA(n) + a ribonucleoside 5'-diphosphate. Functionally, involved in mRNA degradation. Catalyzes the phosphorolysis of single-stranded polyribonucleotides processively in the 3'- to 5'-direction. The chain is Polyribonucleotide nucleotidyltransferase from Clostridium tetani (strain Massachusetts / E88).